The chain runs to 137 residues: Beta-synuclein (137 aa).

2 tandem repeats follow at residues 20 to 30 (EKTKQGVTEAA) and 31 to 41 (EKTKEGVLYVG). The segment at 20 to 67 (EKTKQGVTEAAEKTKEGVLYVGSKTKEGVVQGVASVAEKTKEQASHLG) is 4 X 11 AA tandem repeats of [EGS]-K-T-K-[EQ]-[GQ]-V-X(4). The stretch at 42 to 56 (SKTKEGVVQGVASVA) is one 3; approximate repeat. Copy 4 of the repeat occupies 57–67 (EKTKEQASHLG). A compositionally biased stretch (basic and acidic residues) spans 88 to 97 (EFPTDLKPEE). The interval 88–137 (EFPTDLKPEEVAQEAAEEPLIEPLMEPEGESYEDSPQEEYQEYEPEAKGP) is disordered. Acidic residues predominate over residues 98 to 131 (VAQEAAEEPLIEPLMEPEGESYEDSPQEEYQEYE). Ser118 is subject to Phosphoserine; by BARK1, CK2 and GRK5.

It belongs to the synuclein family. Post-translationally, phosphorylated. Phosphorylation by G-protein coupled receptor kinases (GRK) is more efficient than phosphorylation by CK1, CK2 and CaM-kinase II. Expressed specifically in brain.

The protein resides in the cytoplasm. May be involved in neuronal plasticity. The chain is Beta-synuclein (Sncb) from Rattus norvegicus (Rat).